We begin with the raw amino-acid sequence, 63 residues long: Conotoxin TeAr193 (63 aa).

The N-terminal stretch at 1–22 is a signal peptide; that stretch reads MRCLPVFVILLLLIASAPSVDA. A propeptide spanning residues 23–48 is cleaved from the precursor; sequence QPKTKDDIPQASFLDNAKRYLQVLES.

Belongs to the conotoxin T superfamily. Contains 2 disulfide bonds that can be either 'C1-C3, C2-C4' or 'C1-C4, C2-C3', since these disulfide connectivities have been observed for conotoxins with cysteine framework V (for examples, see AC P0DQQ7 and AC P81755). Expressed by the venom duct.

The protein localises to the secreted. The polypeptide is Conotoxin TeAr193 (Conus textile (Cloth-of-gold cone)).